A 155-amino-acid polypeptide reads, in one-letter code: 3-hydroxyacyl-[acyl-carrier-protein] dehydratase FabZ (155 aa).

The active site involves His-58.

The protein belongs to the thioester dehydratase family. FabZ subfamily.

Its subcellular location is the cytoplasm. The catalysed reaction is a (3R)-hydroxyacyl-[ACP] = a (2E)-enoyl-[ACP] + H2O. Functionally, involved in unsaturated fatty acids biosynthesis. Catalyzes the dehydration of short chain beta-hydroxyacyl-ACPs and long chain saturated and unsaturated beta-hydroxyacyl-ACPs. The polypeptide is 3-hydroxyacyl-[acyl-carrier-protein] dehydratase FabZ (Rhizobium johnstonii (strain DSM 114642 / LMG 32736 / 3841) (Rhizobium leguminosarum bv. viciae)).